We begin with the raw amino-acid sequence, 227 residues long: Probable cytokinin riboside 5'-monophosphate phosphoribohydrolase LOGL9 (227 aa).

A compositionally biased stretch (polar residues) spans 1–15 (MYISSPHTSHFTSID). The disordered stretch occupies residues 1-26 (MYISSPHTSHFTSIDRSPAVVSESDR). Residues Glu117, 135 to 136 (RK), and 152 to 158 (GYGTLEE) contribute to the substrate site.

The protein belongs to the LOG family. Expressed in roots, leaves and stems.

The catalysed reaction is N(6)-(dimethylallyl)adenosine 5'-phosphate + H2O = N(6)-dimethylallyladenine + D-ribose 5-phosphate. It carries out the reaction 9-ribosyl-trans-zeatin 5'-phosphate + H2O = trans-zeatin + D-ribose 5-phosphate. Its function is as follows. Cytokinin-activating enzyme working in the direct activation pathway. Phosphoribohydrolase that converts inactive cytokinin nucleotides to the biologically active free-base forms. This Oryza sativa subsp. japonica (Rice) protein is Probable cytokinin riboside 5'-monophosphate phosphoribohydrolase LOGL9 (LOGL9).